A 275-amino-acid chain; its full sequence is Dermonecrotic toxin LamSicTox-alphaIV1i (275 aa).

Residue His-5 is part of the active site. Positions 25 and 27 each coordinate Mg(2+). His-41 acts as the Nucleophile in catalysis. 2 disulfides stabilise this stretch: Cys-45–Cys-51 and Cys-47–Cys-192. A Mg(2+)-binding site is contributed by Asp-85.

It belongs to the arthropod phospholipase D family. Class II subfamily. Requires Mg(2+) as cofactor. Expressed by the venom gland.

It localises to the secreted. The catalysed reaction is an N-(acyl)-sphingosylphosphocholine = an N-(acyl)-sphingosyl-1,3-cyclic phosphate + choline. It carries out the reaction an N-(acyl)-sphingosylphosphoethanolamine = an N-(acyl)-sphingosyl-1,3-cyclic phosphate + ethanolamine. It catalyses the reaction a 1-acyl-sn-glycero-3-phosphocholine = a 1-acyl-sn-glycero-2,3-cyclic phosphate + choline. The enzyme catalyses a 1-acyl-sn-glycero-3-phosphoethanolamine = a 1-acyl-sn-glycero-2,3-cyclic phosphate + ethanolamine. Its function is as follows. Dermonecrotic toxins cleave the phosphodiester linkage between the phosphate and headgroup of certain phospholipids (sphingolipid and lysolipid substrates), forming an alcohol (often choline) and a cyclic phosphate. This toxin acts on sphingomyelin (SM). It may also act on ceramide phosphoethanolamine (CPE), lysophosphatidylcholine (LPC) and lysophosphatidylethanolamine (LPE), but not on lysophosphatidylserine (LPS), and lysophosphatidylglycerol (LPG). It acts by transphosphatidylation, releasing exclusively cyclic phosphate products as second products. Induces dermonecrosis, hemolysis, increased vascular permeability, edema, inflammatory response, and platelet aggregation. The sequence is that of Dermonecrotic toxin LamSicTox-alphaIV1i from Loxosceles amazonica (Recluse spider).